A 403-amino-acid chain; its full sequence is MSVAFASARPRGKGEVTQQTIQKMLDENHHLIQCIMDYQSKGKTAECTQYQQILHRNLVYLATIADSNQNMQSLLPAPPTQNMNLGPGGMSQTGPSQTLHSQGNLSEALGSSLPPSSIMQGQISNGPNHVSMQQSGQTTLPTTTMSMAVSTHGSAPGYSHTVPSSQNVPMQNQGSIGNYVSRANMNMPSNPVTMMHQQATSSHYTSAQAGSQHYQGQPSIAMMNQSSQGSSMMGQRPLGPYRPSQQGSSQQYLGQEEYYSEQYGHSQGSSEAMTPQYYTDAGHGDYSYQQSSYGEQSYERTFEDSSQHYYEGGNAQYSQQQTGYQQGSGQQQAYSQQQYSNQQNYPGQQQGYVPAQGASSQYSGYQQGQGQQYASYRTSQTTSTAQQQRPYGYEQGQYGNYQQ.

The interval 1–148 (MSVAFASARP…TLPTTTMSMA (148 aa)) is N-terminal auto-inhibitory domain. The SH2-binding signature appears at 50-53 (YQQI). 4 disordered regions span residues 72 to 111 (QSLLPAPPTQNMNLGPGGMSQTGPSQTLHSQGNLSEALGS), 152 to 171 (HGSAPGYSHTVPSSQNVPMQ), 224 to 303 (NQSS…RTFE), and 318 to 403 (SQQQ…NYQQ). 2 stretches are compositionally biased toward polar residues: residues 92-105 (QTGPSQTLHSQGNL) and 161-171 (TVPSSQNVPMQ). The methionine-rich intra-molecular domain stretch occupies residues 149–238 (VSTHGSAPGY…GSSMMGQRPL (90 aa)). Low complexity predominate over residues 224–235 (NQSSQGSSMMGQ). The interval 252–324 (YLGQEEYYSE…AQYSQQQTGY (73 aa)) is MFD domain. Residues 263 to 277 (YGHSQGSSEAMTPQY) are compositionally biased toward polar residues. The segment covering 286-296 (YSYQQSSYGEQ) has biased composition (low complexity). Residues 341 to 403 (NQQNYPGQQQ…EQGQYGNYQQ (63 aa)) form a necessary for nuclear localization region. Positions 360–363 (SQYS) match the SH2-binding motif. An SH3-binding motif is present at residues 378–386 (TSQTTSTAQ). An SH2-binding motif is present at residues 398–401 (YGNY).

It belongs to the SS18 family. In terms of assembly, homodimer.

The protein localises to the nucleus. Transcriptional activator which may be required for calcium-dependent dendritic growth and branching in cortical neurons. This is Calcium-responsive transactivator (ss18l1) from Xenopus laevis (African clawed frog).